A 63-amino-acid chain; its full sequence is Toxin Tx7335 (63 aa).

Cystine bridges form between Cys3–Cys24, Cys17–Cys39, Cys25–Cys55, and Cys56–Cys61.

In terms of processing, contains 4 disulfide bonds. As to expression, expressed by the venom gland.

It localises to the secreted. Functionally, activates bacterial pH-gated potassium channel KcsA by binding to its extracellular domain, probably at a site different from channel inhibitors. Increases both mean open time and open probability of KscA. The protein is Toxin Tx7335 of Dendroaspis angusticeps (Eastern green mamba).